The primary structure comprises 1306 residues: Clustered mitochondria protein homolog (1306 aa).

Positions 1–11 (MAVNNEVNNAA) are enriched in low complexity. Residues 1–47 (MAVNNEVNNAASETPTDVSSSSQKLATEETALTNGADHEEEDGGEAG) form a disordered region. Residues 12–33 (SETPTDVSSSSQKLATEETALT) are compositionally biased toward polar residues. The region spanning 336 to 580 (DITRTQENYL…RVTPLDITWM (245 aa)) is the Clu domain. Disordered stretches follow at residues 630–689 (ERKR…QERI) and 912–956 (KQSQ…SPAA). Basic and acidic residues predominate over residues 656–689 (EPAKSEEPTENGELAKKSESDEAAEPSKPDQERI). TPR repeat units follow at residues 1032-1065 (ARVY…SERT), 1074-1107 (LLNY…WKVV), and 1116-1149 (ITTI…CEEV). The disordered stretch occupies residues 1275 to 1306 (FIEGSDQSNQNKKRPGRSNPKRRGGAAATAGK). Over residues 1285–1298 (NKKRPGRSNPKRRG) the composition is skewed to basic residues.

It belongs to the CLU family. In terms of assembly, may associate with the eukaryotic translation initiation factor 3 (eIF-3) complex.

Its subcellular location is the cytoplasm. Its function is as follows. mRNA-binding protein involved in proper cytoplasmic distribution of mitochondria. This chain is Clustered mitochondria protein homolog, found in Botryotinia fuckeliana (strain B05.10) (Noble rot fungus).